A 312-amino-acid polypeptide reads, in one-letter code: Pantothenate kinase (312 aa).

92 to 99 (GSVAVGKS) serves as a coordination point for ATP.

This sequence belongs to the prokaryotic pantothenate kinase family.

The protein localises to the cytoplasm. The catalysed reaction is (R)-pantothenate + ATP = (R)-4'-phosphopantothenate + ADP + H(+). The protein operates within cofactor biosynthesis; coenzyme A biosynthesis; CoA from (R)-pantothenate: step 1/5. The protein is Pantothenate kinase (coaA) of Vibrio cholerae serotype O1 (strain ATCC 39315 / El Tor Inaba N16961).